A 105-amino-acid chain; its full sequence is Large ribosomal subunit protein uL24 (105 aa).

The protein belongs to the universal ribosomal protein uL24 family. In terms of assembly, part of the 50S ribosomal subunit.

Its function is as follows. One of two assembly initiator proteins, it binds directly to the 5'-end of the 23S rRNA, where it nucleates assembly of the 50S subunit. One of the proteins that surrounds the polypeptide exit tunnel on the outside of the subunit. This is Large ribosomal subunit protein uL24 from Wolbachia sp. subsp. Brugia malayi (strain TRS).